The following is a 150-amino-acid chain: Arginine repressor (150 aa).

The protein belongs to the ArgR family.

Its subcellular location is the cytoplasm. It functions in the pathway amino-acid biosynthesis; L-arginine biosynthesis [regulation]. Regulates arginine biosynthesis genes. The polypeptide is Arginine repressor (Ruminiclostridium cellulolyticum (strain ATCC 35319 / DSM 5812 / JCM 6584 / H10) (Clostridium cellulolyticum)).